The chain runs to 353 residues: GDSL esterase/lipase APG (353 aa).

Residues 1 to 25 form the signal peptide; sequence MDRCTSSFLLLTLVSTLSILQISFA. Serine 37 serves as the catalytic Nucleophile. N-linked (GlcNAc...) asparagine glycans are attached at residues asparagine 197 and asparagine 320. Catalysis depends on residues aspartate 328 and histidine 331.

The protein belongs to the 'GDSL' lipolytic enzyme family.

It localises to the secreted. The sequence is that of GDSL esterase/lipase APG (APG) from Arabidopsis thaliana (Mouse-ear cress).